The sequence spans 278 residues: MVTARETRRNGSRPSGLKKWRQKLDGILLPLAGILGFLIIWQIFSSSGATRLPGPLSLFTEERTRELLLYPFLDRGGLDKGLFWQTIASLTRVAQGFSIAAIIGISVGILVGLNRQLNAMLDPLFQFLRMIAPLAWVPIALVAFQQNQPAAIFVIFITAVWPILINTAEGVRQIPQDYNNVARVLRMSKSKYLMKVVLPAALPYIFTGLRIAIGLSWLAIIAAEIVMSGIVGIGFFIWDAYQQNYVSDIILAVIYIGAVGLLLDRFVAWLQRWILRNM.

7 helical membrane-spanning segments follow: residues 24 to 44 (LDGI…WQIF), 93 to 113 (VAQG…LVGL), 124 to 144 (LFQF…LVAF), 151 to 171 (AIFV…AEGV), 196 to 216 (VVLP…IGLS), 217 to 237 (WLAI…GFFI), and 249 to 269 (IILA…FVAW). Positions 86-267 (TIASLTRVAQ…AVGLLLDRFV (182 aa)) constitute an ABC transmembrane type-1 domain.

This sequence belongs to the binding-protein-dependent transport system permease family. The complex is composed of two ATP-binding proteins (CmpC and CmpD), a transmembrane protein (CmpB) and a solute-binding protein (CmpA).

The protein localises to the cell inner membrane. Functionally, part of the ABC transporter complex CmpABCD involved in bicarbonate transport. Probably responsible for the translocation of the substrate across the membrane. In Synechococcus sp. (strain ATCC 27144 / PCC 6301 / SAUG 1402/1) (Anacystis nidulans), this protein is Bicarbonate transport system permease protein CmpB (cmpB).